The chain runs to 1205 residues: cGMP-specific 3',5'-cyclic phosphodiesterase (1205 aa).

Residues 1–153 (MTDVSSPAGG…TKASTTASQQ (153 aa)) are disordered. Residues 18-32 (TTSSSPAATTSASSS) are compositionally biased toward low complexity. The segment covering 33-48 (KPLTNGANKTTISTTA) has biased composition (polar residues). The segment covering 62 to 71 (GAIPASSSSG) has biased composition (low complexity). Over residues 83-94 (SNNNRPAATNRS) the composition is skewed to polar residues. Positions 118 to 140 (SSSSPSQSPSQTQASIQTQTSQQ) are enriched in low complexity. GAF domains lie at 259-411 (DIDV…GIGI) and 443-624 (NLEC…GLGI). A PDEase domain is found at 654-1052 (SQDQTEKLTQ…RNWQDLAEKV (399 aa)). Residue H730 is the Proton donor of the active site. H734, H770, D771, and D956 together coordinate a divalent metal cation. 2 disordered regions span residues 1093–1122 (QQSQ…TGAL) and 1152–1205 (SHVS…CALL). Composition is skewed to basic and acidic residues over residues 1098–1109 (GSEDSHTPEHQR) and 1152–1162 (SHVSEDMDDKS). The span at 1171–1191 (ASGSMGRMSASSSTSSAGGQM) shows a compositional bias: low complexity. The span at 1195-1205 (SKKRSKLCALL) shows a compositional bias: basic residues. A Cysteine methyl ester modification is found at C1202. The S-farnesyl cysteine moiety is linked to residue C1202. Residues 1203–1205 (ALL) constitute a propeptide, removed in mature form.

It belongs to the cyclic nucleotide phosphodiesterase family. In terms of assembly, interacts with PrBP. A divalent metal cation serves as cofactor.

It localises to the cell membrane. The catalysed reaction is 3',5'-cyclic GMP + H2O = GMP + H(+). Functionally, has a role regulating cGMP transport in Malpighian tubule principal cells. This Drosophila sechellia (Fruit fly) protein is cGMP-specific 3',5'-cyclic phosphodiesterase.